We begin with the raw amino-acid sequence, 419 residues long: Glycine, glutamate and proline-rich protein (419 aa).

The signal sequence occupies residues 1–16 (MKCLVALFLSLSLVAC). The interval 74–152 (VERESEEAEG…VDMCAGESRR (79 aa)) is disordered. Acidic residues predominate over residues 76–85 (RESEEAEGEG). Over residues 86–130 (TDGRGGGEGEREGWGGEREGGEGEREGGEGEREGREGEREGKSSE) the composition is skewed to basic and acidic residues.

In the C-terminal section; belongs to the glycosyl hydrolase 23 family. As to expression, component of the acid-insoluble organic matrix of calcified layers of the shell (at protein level).

It localises to the secreted. This is Glycine, glutamate and proline-rich protein from Lottia gigantea (Giant owl limpet).